The primary structure comprises 102 residues: Class I hydrophobin 1 (102 aa).

The signal sequence occupies residues 1–18; sequence MSLFKILVAAATVATALA. Cystine bridges form between Cys37–Cys84, Cys45–Cys78, Cys46–Cys63, and Cys85–Cys97.

It belongs to the fungal hydrophobin family.

It localises to the secreted. The protein localises to the cell wall. In terms of biological role, aerial growth, conidiation, and dispersal of filamentous fungi in the environment rely upon a capability of their secreting small amphipathic proteins called hydrophobins (HPBs) with low sequence identity. Class I can self-assemble into an outermost layer of rodlet bundles on aerial cell surfaces, conferring cellular hydrophobicity that supports fungal growth, development and dispersal; whereas Class II form highly ordered films at water-air interfaces through intermolecular interactions but contribute nothing to the rodlet structure. Hyd1 is essential for stress tolerance, conidial hydrophobicity, adhesion to insect cuticle, and insect infectivity/pathogenicity. Plays a neglectable role in hyphal growth and asexual development. This is Class I hydrophobin 1 from Metarhizium robertsii (strain ARSEF 23 / ATCC MYA-3075) (Metarhizium anisopliae (strain ARSEF 23)).